We begin with the raw amino-acid sequence, 212 residues long: Ion-translocating oxidoreductase complex subunit G (212 aa).

Residues Ala9–Phe29 traverse the membrane as a helical segment. The residue at position 176 (Thr176) is an FMN phosphoryl threonine.

This sequence belongs to the RnfG family. The complex is composed of six subunits: RnfA, RnfB, RnfC, RnfD, RnfE and RnfG. It depends on FMN as a cofactor.

The protein resides in the cell inner membrane. In terms of biological role, part of a membrane-bound complex that couples electron transfer with translocation of ions across the membrane. The protein is Ion-translocating oxidoreductase complex subunit G of Shewanella loihica (strain ATCC BAA-1088 / PV-4).